A 596-amino-acid polypeptide reads, in one-letter code: Myosin light chain kinase 2, skeletal/cardiac muscle (596 aa).

The disordered stretch occupies residues 1-224; the sequence is MATENGAVEL…AGQAKMQGDT (224 aa). Ala2 carries the post-translational modification N-acetylalanine. A compositionally biased stretch (basic and acidic residues) spans 40–63; that stretch reads DPKKAPDPPTLKKDAKAPASEKGD. The span at 88 to 104 shows a compositional bias: low complexity; the sequence is EGSAGPPAALPQQTATP. Ser143, Ser149, and Ser151 each carry phosphoserine. Residues 189–209 are compositionally biased toward basic and acidic residues; it reads RPAKAEEGKNILAESQKEVGE. The 256-residue stretch at 285–540 folds into the Protein kinase domain; sequence MNSKEALGGG…AAQCLAHPWL (256 aa). ATP-binding positions include 291 to 299 and Lys314; that span reads LGGGKFGAV. Asp406 functions as the Proton acceptor in the catalytic mechanism. Thr445 bears the Phosphothreonine mark. The tract at residues 574-586 is calmodulin-binding; it reads IAVSAANRFKKIS.

Belongs to the protein kinase superfamily. CAMK Ser/Thr protein kinase family. In terms of assembly, may interact with centrin. As to expression, heart and skeletal muscles. Increased expression in the apical tissue compared to the interventricular septal tissue.

The protein resides in the cytoplasm. The catalysed reaction is L-seryl-[myosin light chain] + ATP = O-phospho-L-seryl-[myosin light chain] + ADP + H(+). It carries out the reaction L-threonyl-[myosin light chain] + ATP = O-phospho-L-threonyl-[myosin light chain] + ADP + H(+). In terms of biological role, implicated in the level of global muscle contraction and cardiac function. Phosphorylates a specific serine in the N-terminus of a myosin light chain. This is Myosin light chain kinase 2, skeletal/cardiac muscle (MYLK2) from Homo sapiens (Human).